The primary structure comprises 120 residues: MLKFTSEHEWLQIEGDIATVGITAHAAEQLGDLVFVELPEVGATFAKDGQAATVESVKAASDVYCPLDGEVTEINQAIVDDPSLVNSDPRGAGWFFKLKLANPADAEGLLNEAAYNELIA.

Residues 17 to 99 (IATVGITAHA…RGAGWFFKLK (83 aa)) form the Lipoyl-binding domain. Lys58 carries the N6-lipoyllysine modification.

This sequence belongs to the GcvH family. As to quaternary structure, the glycine cleavage system is composed of four proteins: P, T, L and H. (R)-lipoate serves as cofactor.

Its function is as follows. The glycine cleavage system catalyzes the degradation of glycine. The H protein shuttles the methylamine group of glycine from the P protein to the T protein. The polypeptide is Glycine cleavage system H protein (Allorhizobium ampelinum (strain ATCC BAA-846 / DSM 112012 / S4) (Agrobacterium vitis (strain S4))).